The sequence spans 1270 residues: ATP-dependent helicase/nuclease subunit A (1270 aa).

One can recognise a UvrD-like helicase ATP-binding domain in the interval 3–476 (TKWTEEQELA…IMLYKNFRSR (474 aa)). 24-31 (AAAGSGKT) is an ATP binding site. Residues 528–823 (IENLKVAGDI…RIMSIHKSKG (296 aa)) form the UvrD-like helicase C-terminal domain.

Belongs to the helicase family. AddA subfamily. In terms of assembly, heterodimer of AddA and AddB/RexB. It depends on Mg(2+) as a cofactor.

It catalyses the reaction Couples ATP hydrolysis with the unwinding of duplex DNA by translocating in the 3'-5' direction.. The enzyme catalyses ATP + H2O = ADP + phosphate + H(+). Its function is as follows. The heterodimer acts as both an ATP-dependent DNA helicase and an ATP-dependent, dual-direction single-stranded exonuclease. Recognizes the chi site generating a DNA molecule suitable for the initiation of homologous recombination. The AddA nuclease domain is required for chi fragment generation; this subunit has the helicase and 3' -&gt; 5' nuclease activities. The sequence is that of ATP-dependent helicase/nuclease subunit A from Clostridium perfringens (strain SM101 / Type A).